The primary structure comprises 307 residues: MGDKGRSLKINKNMEEFTKVEEEMDVRRGPWTVEEDLELINYIASHGEGRWNSLARCAELKRTGKSCRLRWLNYLRPDVRRGNITLEEQLLILELHTRWGNRWSKIAQYLPGRTDNEIKNYWRTRVQKHAKQLKCDVNSQQFKDTMKYLWMPRLVERIQAASIGSVSMSSCVTTSSDQFVINNNNTNNVDNLALMSNPNGYITPDNSSVAVSPVSDLTECQVSSEVWKIGQDENLVDPKMTSPNYMDNSSGLLNGDFTKMQDQSDLNWFENINGMVPNYSDSFWNIGNDEDFWLLQQHQQVHDNGSF.

HTH myb-type domains follow at residues Glu-23 to Val-79 and Arg-80 to Ala-130. 2 DNA-binding regions (H-T-H motif) span residues Trp-51 to Leu-75 and Trp-103 to Val-126.

It localises to the nucleus. This chain is Transcription factor MYB78, found in Arabidopsis thaliana (Mouse-ear cress).